The sequence spans 93 residues: Large ribosomal subunit protein bL27 (93 aa).

A propeptide spanning residues 1 to 9 (MLRLDLQFF) is cleaved from the precursor.

It belongs to the bacterial ribosomal protein bL27 family. In terms of processing, the N-terminus is cleaved by ribosomal processing cysteine protease Prp.

The chain is Large ribosomal subunit protein bL27 from Bacillus licheniformis (strain ATCC 14580 / DSM 13 / JCM 2505 / CCUG 7422 / NBRC 12200 / NCIMB 9375 / NCTC 10341 / NRRL NRS-1264 / Gibson 46).